Reading from the N-terminus, the 353-residue chain is Endophilin-A3 (353 aa).

The interval 1–21 is membrane-binding amphipathic helix; that stretch reads MSVAGLKKQFHKASQLFSEKI. One can recognise a BAR domain in the interval 18-249; sequence SEKISGAEGT…LQNRINVASS (232 aa). Residues 60 to 87 are required for dimerization upon membrane association; that stretch reads PNPAYRAKLGMLNTMSKIRGQVKTTGYP. Residues 180 to 201 adopt a coiled-coil conformation; that stretch reads DEEVKQAVEKFEESKELAERSM. The tract at residues 218 to 254 is interaction with ARC; the sequence is FVEAALDYHKQSTEILEDLQSKLQNRINVASSRPKRE. Residues 291-350 form the SH3 domain; sequence VDQPCCQALYDFEPENEGELGFKEGDIITLTNQIDENWYEGMLNGESGFFPHNYVEVMVP.

This sequence belongs to the endophilin family. As to quaternary structure, interacts with ARC. Interacts with SYNJ1 and DNM1. As to expression, highest level in a region associated with endocytosis of yolk proteins in developing oocytes (at protein level). Highest level in small ovarian follicles. High levels in brain and testis. Lower level in adrenal glands.

Its subcellular location is the cytoplasm. It is found in the early endosome membrane. Its function is as follows. Implicated in endocytosis. May recruit other proteins to membranes with high curvature. Implicated in endocytosis of yolk proteins during oogenesis. In Gallus gallus (Chicken), this protein is Endophilin-A3.